Here is a 634-residue protein sequence, read N- to C-terminus: Factor of DNA methylation 1 (634 aa).

Residues 288–469 (LDEKKNLHQA…LESMNSVLMT (182 aa)) are a coiled coil. A compositionally biased stretch (basic and acidic residues) spans 349 to 364 (ELDRQKLDEDKRKSDA). The tract at residues 349 to 375 (ELDRQKLDEDKRKSDAMNKSLQLASRE) is disordered.

Homodimer. Interacts with IDN2 and AGO4. Forms a complex with IDN2 and FMD2/INDL2. In terms of tissue distribution, highly expressed in flowers and at lower levels in roots, leaves and stems.

Functionally, forms a complex with IDN2 and FDM2/IDNL2 that is required for RNA-directed DNA methylation (RdDM) and that functions at a downstream step of the RdDM pathway. Required for de novo DNA methylation and 24 nucleotide small interfering RNA (siRNA) accumulation. Binds unmethylated but not methylated DNAs through its coiled-coil domain. May bind double-stranded RNAs (dsRNAs) with 5'-overhangs through its XS domain. However, according to, FMD1 does not bind dsRNAs. In Arabidopsis thaliana (Mouse-ear cress), this protein is Factor of DNA methylation 1.